The sequence spans 263 residues: Phosphate import ATP-binding protein PstB (263 aa).

The 242-residue stretch at 17-258 (ISVKNLDFFY…PKRKETEDYI (242 aa)) folds into the ABC transporter domain. 49–56 (GPSGCGKS) lines the ATP pocket.

This sequence belongs to the ABC transporter superfamily. Phosphate importer (TC 3.A.1.7) family. In terms of assembly, the complex is composed of two ATP-binding proteins (PstB), two transmembrane proteins (PstC and PstA) and a solute-binding protein (PstS).

It localises to the cell inner membrane. The enzyme catalyses phosphate(out) + ATP + H2O = ADP + 2 phosphate(in) + H(+). Functionally, part of the ABC transporter complex PstSACB involved in phosphate import. Responsible for energy coupling to the transport system. This Polaromonas sp. (strain JS666 / ATCC BAA-500) protein is Phosphate import ATP-binding protein PstB.